Here is a 510-residue protein sequence, read N- to C-terminus: Propionyl-CoA carboxylase beta chain (510 aa).

The region spanning 1–257 (MKDILEQLED…NNREKPPVRP (257 aa)) is the CoA carboxyltransferase N-terminal domain. Residues 1–504 (MKDILEQLED…NKSVQMPWKK (504 aa)) are carboxyltransferase. The 244-residue stretch at 261 to 504 (DPDRIEPSLD…NKSVQMPWKK (244 aa)) folds into the CoA carboxyltransferase C-terminal domain. An acyl-CoA binding region spans residues 292–325 (DEGDFYEIQEEFAKNIITGFIRLEGRTVGVVANQ).

This sequence belongs to the AccD/PCCB family. In terms of assembly, the holoenzyme is a dodecamer composed of 6 PccA/alpha subunits and 6 PccB/beta subunits.

It carries out the reaction propanoyl-CoA + hydrogencarbonate + ATP = (S)-methylmalonyl-CoA + ADP + phosphate + H(+). It functions in the pathway metabolic intermediate metabolism; propanoyl-CoA degradation; succinyl-CoA from propanoyl-CoA: step 1/3. Functionally, this is one of the 2 subunits of the biotin-dependent propionyl-CoA carboxylase (PCC), the enzyme catalyzing the carboxylation of propionyl-CoA/propanoyl-CoA to D-methylmalonyl-CoA/(S)-methylmalonyl-CoA. Within the holoenzyme, the alpha subunit catalyzes the ATP-dependent carboxylation of the biotin carried by the biotin carboxyl carrier (BCC) domain, while the beta subunit then tranfers the carboxyl group from carboxylated biotin to propionyl-CoA. In Roseobacter denitrificans (strain ATCC 33942 / OCh 114) (Erythrobacter sp. (strain OCh 114)), this protein is Propionyl-CoA carboxylase beta chain.